A 191-amino-acid chain; its full sequence is Elongation factor P (191 aa).

It belongs to the elongation factor P family.

Its subcellular location is the cytoplasm. Its pathway is protein biosynthesis; polypeptide chain elongation. Involved in peptide bond synthesis. Stimulates efficient translation and peptide-bond synthesis on native or reconstituted 70S ribosomes in vitro. Probably functions indirectly by altering the affinity of the ribosome for aminoacyl-tRNA, thus increasing their reactivity as acceptors for peptidyl transferase. This Ralstonia pickettii (strain 12J) protein is Elongation factor P.